Reading from the N-terminus, the 427-residue chain is Serine protease HTRA2, mitochondrial (427 aa).

A disordered region spans residues 33-57 (HTASSSKGSGGDNSKDQENNGQNKS). Residues 67-87 (VFQFCVPFSLGALVSAVLIEG) form a helical membrane-spanning segment. The IAP-binding signature appears at 78 to 81 (ALVS). A serine protease region spans residues 144–307 (SNGSGFVIEQ…IPIDYVKVFL (164 aa)). Catalysis depends on charge relay system residues His162, Asp194, and Ser271. Residues 330 to 415 (MGITMLTLTP…DLEIVILRGV (86 aa)) enclose the PDZ domain.

It belongs to the peptidase S1C family. As to quaternary structure, interacts with th/DIAP1 (via BIR 2 domain).

It is found in the mitochondrion intermembrane space. It localises to the mitochondrion membrane. The catalysed reaction is Cleavage of non-polar aliphatic amino-acids at the P1 position, with a preference for Val, Ile and Met. At the P2 and P3 positions, Arg is selected most strongly with a secondary preference for other hydrophilic residues.. In terms of biological role, serine protease that shows proteolytic activity against a non-specific substrate beta-casein. Promotes or induces cell death either by direct binding to and inhibition of BIRC proteins (also called inhibitor of apoptosis proteins, IAPs), leading to an increase in caspase activity, or by a BIRC inhibition-independent, caspase-independent and serine protease activity-dependent mechanism. Can antagonize antiapoptotic activity of th/Diap1 by directly inducing the degradation of th/Diap1. This is Serine protease HTRA2, mitochondrial from Drosophila persimilis (Fruit fly).